The following is a 468-amino-acid chain: Aldehyde dehydrogenase family 3 member B1 (468 aa).

Position 1 is an N-acetylmethionine (methionine 1). 188–193 is a binding site for NAD(+); the sequence is GNPQVG. Catalysis depends on residues glutamate 210 and cysteine 244. A lipid anchor (S-palmitoyl cysteine) is attached at cysteine 463. Residue cysteine 465 is modified to Cysteine methyl ester. Cysteine 465 carries S-geranylgeranyl cysteine lipidation. Residues 466-468 constitute a propeptide, removed in mature form; that stretch reads TLL.

This sequence belongs to the aldehyde dehydrogenase family. Post-translationally, dually lipidated in the C-terminus; prenylation occurs prior to, and is a prerequisite for palmitoylation. It is also required for activity towards long-chain substrates.

It localises to the cell membrane. The enzyme catalyses an aldehyde + NAD(+) + H2O = a carboxylate + NADH + 2 H(+). It carries out the reaction a long-chain fatty aldehyde + NAD(+) + H2O = a long-chain fatty acid + NADH + 2 H(+). It catalyses the reaction a medium-chain fatty aldehyde + NAD(+) + H2O = a medium-chain fatty acid + NADH + 2 H(+). The catalysed reaction is octanal + NAD(+) + H2O = octanoate + NADH + 2 H(+). The enzyme catalyses nonanal + NAD(+) + H2O = nonanoate + NADH + 2 H(+). It carries out the reaction hexadecanoate + NADH + 2 H(+) = hexadecanal + NAD(+) + H2O. It catalyses the reaction (2E)-octenal + NAD(+) + H2O = (2E)-octenoate + NADH + 2 H(+). The catalysed reaction is (E)-non-2-enal + NAD(+) + H2O = (E)-non-2-enoate + NADH + 2 H(+). The enzyme catalyses (E)-4-hydroxynon-2-enal + NAD(+) + H2O = (E)-4-hydroxynon-2-enoate + NADH + 2 H(+). It carries out the reaction (2E)-hexadecenal + NAD(+) + H2O = (E)-hexadec-2-enoate + NADH + 2 H(+). It catalyses the reaction benzaldehyde + NAD(+) + H2O = benzoate + NADH + 2 H(+). The catalysed reaction is an aldehyde + NADP(+) + H2O = a carboxylate + NADPH + 2 H(+). The enzyme catalyses a medium-chain fatty aldehyde + NADP(+) + H2O = a medium-chain fatty acid + NADPH + 2 H(+). It carries out the reaction hexanal + NADP(+) + H2O = hexanoate + NADPH + 2 H(+). It catalyses the reaction octanal + NADP(+) + H2O = octanoate + NADPH + 2 H(+). The catalysed reaction is nonanal + NADP(+) + H2O = nonanoate + NADPH + 2 H(+). The enzyme catalyses (2E)-octenal + NADP(+) + H2O = (2E)-octenoate + NADPH + 2 H(+). It carries out the reaction (E)-non-2-enal + NADP(+) + H2O = (E)-non-2-enoate + NADPH + 2 H(+). It catalyses the reaction (E)-4-hydroxynon-2-enal + NADP(+) + H2O = (E)-4-hydroxynon-2-enoate + NADPH + 2 H(+). The catalysed reaction is benzaldehyde + NADP(+) + H2O = benzoate + NADPH + 2 H(+). It participates in alcohol metabolism; ethanol degradation; acetate from ethanol: step 2/2. Its function is as follows. Oxidizes medium and long chain saturated and unsaturated fatty aldehydes generated in the plasma membrane into non-toxic fatty acids. May have a protective role against the cytotoxicity induced by lipid peroxidation. Short-chain fatty aldehydes are not good substrates. Can use both NADP(+) and NAD(+) as electron acceptor in vitro, however in vivo preference will depend on their tissue levels. Low activity towards acetaldehyde and 3,4-dihydroxyphenylacetaldehyde. Able to metabolize aromatic aldehydes such as benzaldehyde to their acid form. The sequence is that of Aldehyde dehydrogenase family 3 member B1 (ALDH3B1) from Bos taurus (Bovine).